The sequence spans 469 residues: MAFFRTVTKLRSRLGQPPSLRDSVRCLQTQASSDLDLHSQLKELIPEQQERLKKLKKEHGKVQLGTITVDMVIGGMRGMTGLLWETSLLDPDEGIRFRGLSIPECQKVLPGATPGGEPLPEGLLWLLLTGKVPSRSKNMHYPVNNGVVPKFQIMCSRPLMLCLLEHIPMTQFTTGVMALQVQSEFQKAYDKGIPKSRYWEPTYEDSLSLIAQLPVVASYVYRRIYKGGRMIPVDDSLDYGGNFSHLLGFDDHKMQELMRLYVTIHSDHEGGNVSAHTGHLVASALSDPFLSFAAALNGLAGPLHGLANQEVLLWIKSVVDECGENITKDQLKDYVWKTLNSGKVVPGFGHGVLRKTDPRYTCQREFALKHLPDDPLFRLVSKLYDVVPPILTELGKVKNPWPNVDAHSGVLLNHFGLTEARYFTVLFGVSRSIGIGSQLIWDRALGLPLERPKSVTMESLESFCKKAAS.

Residues 1–28 (MAFFRTVTKLRSRLGQPPSLRDSVRCLQ) constitute a mitochondrion transit peptide. Catalysis depends on residues H304, H350, and D405.

It belongs to the citrate synthase family. Homodimer.

The protein resides in the mitochondrion matrix. The catalysed reaction is oxaloacetate + acetyl-CoA + H2O = citrate + CoA + H(+). Its pathway is carbohydrate metabolism; tricarboxylic acid cycle; isocitrate from oxaloacetate: step 1/2. The protein is Citrate synthase, mitochondrial (MCSI) of Fragaria ananassa (Strawberry).